The chain runs to 287 residues: Inorganic pyrophosphatase (287 aa).

Arginine 79 contributes to the diphosphate binding site. 3 residues coordinate Mg(2+): aspartate 116, aspartate 121, and aspartate 153. The span at 244–258 (NSTLGNSDSVDSSKL) shows a compositional bias: polar residues. Residues 244-269 (NSTLGNSDSVDSSKLASIPRGENLPP) are disordered.

It belongs to the PPase family. The cofactor is Mg(2+).

The protein localises to the cytoplasm. It catalyses the reaction diphosphate + H2O = 2 phosphate + H(+). Functionally, involved in osmoadaptation. The chain is Inorganic pyrophosphatase (ipp1) from Emericella nidulans (strain FGSC A4 / ATCC 38163 / CBS 112.46 / NRRL 194 / M139) (Aspergillus nidulans).